A 302-amino-acid chain; its full sequence is Meiotically up-regulated gene 129 protein (302 aa).

Has a role in meiosis. The chain is Meiotically up-regulated gene 129 protein (mug129) from Schizosaccharomyces pombe (strain 972 / ATCC 24843) (Fission yeast).